A 255-amino-acid polypeptide reads, in one-letter code: Pyrroloquinoline-quinone synthase (255 aa).

The protein belongs to the PqqC family.

It carries out the reaction 6-(2-amino-2-carboxyethyl)-7,8-dioxo-1,2,3,4,7,8-hexahydroquinoline-2,4-dicarboxylate + 3 O2 = pyrroloquinoline quinone + 2 H2O2 + 2 H2O + H(+). Its pathway is cofactor biosynthesis; pyrroloquinoline quinone biosynthesis. In terms of biological role, ring cyclization and eight-electron oxidation of 3a-(2-amino-2-carboxyethyl)-4,5-dioxo-4,5,6,7,8,9-hexahydroquinoline-7,9-dicarboxylic-acid to PQQ. This chain is Pyrroloquinoline-quinone synthase, found in Cereibacter sphaeroides (strain ATCC 17025 / ATH 2.4.3) (Rhodobacter sphaeroides).